We begin with the raw amino-acid sequence, 489 residues long: Neuropeptide CCHamide-2 receptor (489 aa).

The Extracellular portion of the chain corresponds to 1–74 (MYASLMDVGQ…DRPETYIVTV (74 aa)). Asparagine 25 and asparagine 50 each carry an N-linked (GlcNAc...) asparagine glycan. A helical transmembrane segment spans residues 75–95 (LYTLIFIVGVLGNGTLVIIFF). Topologically, residues 96 to 107 (RHRSMRNIPNTY) are cytoplasmic. Residues 108–128 (ILSLALADLLVILVCVPVATI) form a helical membrane-spanning segment. The Extracellular portion of the chain corresponds to 129 to 143 (VYTQESWPFERNMCR). Cysteines 142 and 225 form a disulfide. Residues 144 to 164 (ISEFFKDISIGVSVFTLTALS) form a helical membrane-spanning segment. Residues 165-184 (GERYCAIVNPLRKLQTKPLT) are Cytoplasmic-facing. The chain crosses the membrane as a helical span at residues 185-205 (VFTAVMIWILAILLGMPSVLF). Over 206 to 235 (SDIKSYPVFTATGNMTIEVCSPFRDPEYAK) the chain is Extracellular. A glycan (N-linked (GlcNAc...) asparagine) is linked at asparagine 219. A helical transmembrane segment spans residues 236–256 (FMVAGKALVYYLLPLSIIGAL). The Cytoplasmic segment spans residues 257–293 (YIMMAKRLHMSARNMPGEQQSMQSRTQARARLHVARM). A helical transmembrane segment spans residues 294-314 (VVAFVVVFFICFFPYHVFELW). Topologically, residues 315 to 333 (YHFYPTAEEDFDEFWNVLR) are extracellular. A helical transmembrane segment spans residues 334–354 (IVGFCTSFLNSCVNPVALYCV). At 355–489 (SGVFRQHFNR…NRYESGVMRY (135 aa)) the chain is on the cytoplasmic side. Residues 438 to 468 (SFHRQDSMPLQHGNAHGGGAGGGSSGLGAGG) form a disordered region. The segment covering 452–468 (AHGGGAGGGSSGLGAGG) has biased composition (gly residues).

This sequence belongs to the G-protein coupled receptor 1 family. As to expression, highly expressed in larval brain. Also highly expressed in adult brain with very low levels in larval and adult gut.

The protein resides in the cell membrane. Receptor for the neuropeptide CCHamide-2. This is Neuropeptide CCHamide-2 receptor from Drosophila melanogaster (Fruit fly).